Consider the following 76-residue polypeptide: Small ribosomal subunit protein eS17 (76 aa).

It belongs to the eukaryotic ribosomal protein eS17 family.

In Picrophilus torridus (strain ATCC 700027 / DSM 9790 / JCM 10055 / NBRC 100828 / KAW 2/3), this protein is Small ribosomal subunit protein eS17.